A 239-amino-acid polypeptide reads, in one-letter code: Ribosomal RNA small subunit methyltransferase G (239 aa).

S-adenosyl-L-methionine-binding positions include Gly-77, Phe-82, 128-129, and Arg-146; that span reads AE. Residues 216–239 are disordered; sequence KRRQTSKKYPRKPGTPNKSPLVES.

It belongs to the methyltransferase superfamily. RNA methyltransferase RsmG family.

It localises to the cytoplasm. Its function is as follows. Specifically methylates the N7 position of guanine in position 535 of 16S rRNA. The protein is Ribosomal RNA small subunit methyltransferase G of Staphylococcus epidermidis (strain ATCC 35984 / DSM 28319 / BCRC 17069 / CCUG 31568 / BM 3577 / RP62A).